A 104-amino-acid polypeptide reads, in one-letter code: Pyrimidine/purine nucleoside phosphorylase (104 aa).

Belongs to the nucleoside phosphorylase PpnP family.

It carries out the reaction a purine D-ribonucleoside + phosphate = a purine nucleobase + alpha-D-ribose 1-phosphate. It catalyses the reaction adenosine + phosphate = alpha-D-ribose 1-phosphate + adenine. The catalysed reaction is cytidine + phosphate = cytosine + alpha-D-ribose 1-phosphate. The enzyme catalyses guanosine + phosphate = alpha-D-ribose 1-phosphate + guanine. It carries out the reaction inosine + phosphate = alpha-D-ribose 1-phosphate + hypoxanthine. It catalyses the reaction thymidine + phosphate = 2-deoxy-alpha-D-ribose 1-phosphate + thymine. The catalysed reaction is uridine + phosphate = alpha-D-ribose 1-phosphate + uracil. The enzyme catalyses xanthosine + phosphate = alpha-D-ribose 1-phosphate + xanthine. Catalyzes the phosphorolysis of diverse nucleosides, yielding D-ribose 1-phosphate and the respective free bases. Can use uridine, adenosine, guanosine, cytidine, thymidine, inosine and xanthosine as substrates. Also catalyzes the reverse reactions. This is Pyrimidine/purine nucleoside phosphorylase from Thiobacillus denitrificans (strain ATCC 25259 / T1).